Here is a 100-residue protein sequence, read N- to C-terminus: Large ribosomal subunit protein uL23 (100 aa).

It belongs to the universal ribosomal protein uL23 family. In terms of assembly, part of the 50S ribosomal subunit. Contacts protein L29, and trigger factor when it is bound to the ribosome.

In terms of biological role, one of the early assembly proteins it binds 23S rRNA. One of the proteins that surrounds the polypeptide exit tunnel on the outside of the ribosome. Forms the main docking site for trigger factor binding to the ribosome. In Novosphingobium aromaticivorans (strain ATCC 700278 / DSM 12444 / CCUG 56034 / CIP 105152 / NBRC 16084 / F199), this protein is Large ribosomal subunit protein uL23.